The following is a 343-amino-acid chain: Small ribosomal subunit biogenesis GTPase RsgA (343 aa).

The interval 1–32 (MAKRRLSKRQVDRIRERQSQRLDTSVAAPDGK) is disordered. The span at 9-20 (RQVDRIRERQSQ) shows a compositional bias: basic and acidic residues. The region spanning 109–273 (YGKLKPVAAN…CIDSPGIREF (165 aa)) is the CP-type G domain. GTP-binding positions include 156-159 (NKLD) and 215-223 (GQSGVGKSS). Zn(2+) is bound by residues cysteine 297, cysteine 302, histidine 304, and cysteine 310.

This sequence belongs to the TRAFAC class YlqF/YawG GTPase family. RsgA subfamily. Monomer. Associates with 30S ribosomal subunit, binds 16S rRNA. The cofactor is Zn(2+).

Its subcellular location is the cytoplasm. Its function is as follows. One of several proteins that assist in the late maturation steps of the functional core of the 30S ribosomal subunit. Helps release RbfA from mature subunits. May play a role in the assembly of ribosomal proteins into the subunit. Circularly permuted GTPase that catalyzes slow GTP hydrolysis, GTPase activity is stimulated by the 30S ribosomal subunit. The protein is Small ribosomal subunit biogenesis GTPase RsgA of Saccharophagus degradans (strain 2-40 / ATCC 43961 / DSM 17024).